Reading from the N-terminus, the 547-residue chain is TBCC domain-containing protein 1 (547 aa).

The 132-residue stretch at 304–435 folds into the C-CAP/cofactor C-like domain; that stretch reads PHTHRMVVMS…LEDHMAQTGL (132 aa).

This sequence belongs to the TBCC family.

The protein localises to the cytoplasm. It localises to the cytoskeleton. Its subcellular location is the microtubule organizing center. It is found in the centrosome. The protein resides in the spindle pole. In terms of biological role, may play a role in the regulation of centrosome and Golgi apparatus positioning. This chain is TBCC domain-containing protein 1 (tbccd1), found in Xenopus laevis (African clawed frog).